The primary structure comprises 354 residues: Probable L-ascorbate-6-phosphate lactonase UlaG (354 aa).

The protein belongs to the UlaG family. The cofactor is a divalent metal cation.

It is found in the cytoplasm. It carries out the reaction L-ascorbate 6-phosphate + H2O = 3-dehydro-L-gulonate 6-phosphate. Its pathway is cofactor degradation; L-ascorbate degradation; D-xylulose 5-phosphate from L-ascorbate: step 1/4. Functionally, probably catalyzes the hydrolysis of L-ascorbate-6-P into 3-keto-L-gulonate-6-P. Is essential for L-ascorbate utilization under anaerobic conditions. The sequence is that of Probable L-ascorbate-6-phosphate lactonase UlaG from Salmonella gallinarum (strain 287/91 / NCTC 13346).